A 332-amino-acid polypeptide reads, in one-letter code: Ubiquinone biosynthesis protein COQ4, mitochondrial (332 aa).

The N-terminal 24 residues, 1–24 (MLRLGVSRTPINRQFVGYEQRRHF), are a transit peptide targeting the mitochondrion. Zn(2+) contacts are provided by His-210, Asp-211, His-214, and Glu-226.

This sequence belongs to the COQ4 family. As to quaternary structure, component of a multi-subunit COQ enzyme complex, composed of at least COQ3, COQ4, COQ5, COQ6, COQ7 and COQ9. Requires Zn(2+) as cofactor.

The protein localises to the mitochondrion inner membrane. It carries out the reaction a 4-hydroxy-3-methoxy-5-(all-trans-polyprenyl)benzoate + H(+) = a 2-methoxy-6-(all-trans-polyprenyl)phenol + CO2. It functions in the pathway cofactor biosynthesis; ubiquinone biosynthesis. Functionally, lyase that catalyzes the C1-decarboxylation of 4-hydroxy-3-methoxy-5-(all-trans-polyprenyl)benzoic acid into 2-methoxy-6-(all-trans-polyprenyl)phenol during ubiquinone biosynthesis. The protein is Ubiquinone biosynthesis protein COQ4, mitochondrial of Zygosaccharomyces rouxii (strain ATCC 2623 / CBS 732 / NBRC 1130 / NCYC 568 / NRRL Y-229).